A 427-amino-acid chain; its full sequence is Peptidase B (427 aa).

2 residues coordinate Mn(2+): lysine 195 and aspartate 200. Lysine 207 is a catalytic residue. The Mn(2+) site is built by aspartate 218, aspartate 277, and glutamate 279. The active site involves arginine 281.

Belongs to the peptidase M17 family. In terms of assembly, homohexamer. Mn(2+) is required as a cofactor.

The protein localises to the cytoplasm. It catalyses the reaction Release of an N-terminal amino acid, Xaa, from a peptide or arylamide. Xaa is preferably Glu or Asp but may be other amino acids, including Leu, Met, His, Cys and Gln.. Its function is as follows. Probably plays an important role in intracellular peptide degradation. The protein is Peptidase B of Escherichia coli O139:H28 (strain E24377A / ETEC).